A 638-amino-acid chain; its full sequence is Epithelial sodium channel subunit beta (638 aa).

Topologically, residues 1-50 (MPVKKYLLKCLHRLQKGPGYTYKELLVWYCNNTNTHGPKRIICEGPKKKA) are cytoplasmic. The helical transmembrane segment at 51–71 (MWFLLTLLFACLVCWQWGVFI) threads the bilayer. The Extracellular segment spans residues 72 to 530 (QTYLSWEVSV…GGQFGFWMGG (459 aa)). Intrachain disulfides connect Cys98-Cys270, Cys182-Cys187, Cys194-Cys201, Cys247-Cys254, Cys359-Cys446, Cys384-Cys442, Cys388-Cys438, Cys397-Cys424, and Cys399-Cys413. Residues Asn135 and Asn141 are each glycosylated (N-linked (GlcNAc...) asparagine). An N-linked (GlcNAc...) asparagine glycan is attached at Asn205. The chain crosses the membrane as a helical span at residues 531–551 (SVLCLIEFGEIIIDFIWITII). Residues 552-638 (KLVASCKGLR…MESDSEVEAI (87 aa)) lie on the Cytoplasmic side of the membrane. The tract at residues 594–620 (SCRPHGEVYPDQQTLPIPGTPPPNYDS) is disordered. The PY motif; recruits WW domain-containing proteins and is thereby required for ubiquitination and inhibition of the channel by NEDD4 and NEDD4L motif lies at 614–618 (PPPNY). A phosphoserine mark is found at Ser631 and Ser633.

It belongs to the amiloride-sensitive sodium channel (TC 1.A.6) family. SCNN1B subfamily. Component of the heterotrimeric epithelial sodium channel (ENaC) composed of an alpha/SCNN1A, a beta/SCNN1B and a gamma/SCNN1G subunit. Interacts with WWP1 (via WW domains). Interacts with WWP2 (via WW domains); inhibits the channel. Interacts with the full-length immature form of PCSK9 (pro-PCSK9). Interacts (N-glycosylated) with BPIFA1; the interaction is direct and inhibits the proteolytic processing of SCNN1A and SCNN1G and the activation of ENaC. Ubiquitinated. Can be ubiquitinated at multiple sites and undergo monoubiquitination and polyubiquitination. Ubiquitination by NEDD4 or NEDD4L inhibits the ENaC channel through endocytosis, intracellular retention and degradation of its individual subunits. However, some studies could not confirm the ubiquitination of this subunit of the ENaC. In terms of processing, N-glycosylated. N-glycosylation is required for interaction with BPIFA1. Post-translationally, phosphorylated on serine and threonine residues. Aldosterone and insulin increase the basal level of phosphorylation. As to expression, lung and kidney.

Its subcellular location is the apical cell membrane. It localises to the cytoplasmic vesicle membrane. It catalyses the reaction Na(+)(in) = Na(+)(out). Originally identified and characterized by its inhibition by the diuretic drug amiloride. This is one of the three pore-forming subunits of the heterotrimeric epithelial sodium channel (ENaC), a critical regulator of sodium balance and fluid homeostasis. ENaC operates in epithelial tissues, where it mediates the electrodiffusion of sodium ions from extracellular fluid through the apical membrane of cells, with water following osmotically. It plays a key role in maintaining sodium homeostasis through electrogenic sodium reabsorption in the kidneys. This subunit is not essential for ENaC function in airway surface liquid homeostasis and proper mucus clearance. This Mus musculus (Mouse) protein is Epithelial sodium channel subunit beta.